Reading from the N-terminus, the 376-residue chain is UPF0754 membrane protein SE_1527 (376 aa).

2 consecutive transmembrane segments (helical) span residues 4-24 (ILLV…TNMI) and 356-376 (TLGF…AIFV).

This sequence belongs to the UPF0754 family.

Its subcellular location is the cell membrane. In Staphylococcus epidermidis (strain ATCC 12228 / FDA PCI 1200), this protein is UPF0754 membrane protein SE_1527.